We begin with the raw amino-acid sequence, 102 residues long: Integration host factor subunit beta (102 aa).

The protein belongs to the bacterial histone-like protein family. As to quaternary structure, heterodimer of an alpha and a beta chain.

Functionally, this protein is one of the two subunits of integration host factor, a specific DNA-binding protein that functions in genetic recombination as well as in transcriptional and translational control. This chain is Integration host factor subunit beta, found in Marinomonas sp. (strain MWYL1).